The primary structure comprises 192 residues: Xanthine phosphoribosyltransferase (192 aa).

Residues Leu20 and Asn27 each coordinate xanthine. 128–132 (ANGDA) serves as a coordination point for 5-phospho-alpha-D-ribose 1-diphosphate. Position 156 (Lys156) interacts with xanthine.

This sequence belongs to the purine/pyrimidine phosphoribosyltransferase family. Xpt subfamily. In terms of assembly, homodimer.

It is found in the cytoplasm. The catalysed reaction is XMP + diphosphate = xanthine + 5-phospho-alpha-D-ribose 1-diphosphate. It functions in the pathway purine metabolism; XMP biosynthesis via salvage pathway; XMP from xanthine: step 1/1. In terms of biological role, converts the preformed base xanthine, a product of nucleic acid breakdown, to xanthosine 5'-monophosphate (XMP), so it can be reused for RNA or DNA synthesis. The polypeptide is Xanthine phosphoribosyltransferase (Staphylococcus aureus (strain Mu3 / ATCC 700698)).